Here is a 129-residue protein sequence, read N- to C-terminus: UPF0325 protein YPTS_3127 (129 aa).

This sequence belongs to the UPF0325 family.

This is UPF0325 protein YPTS_3127 from Yersinia pseudotuberculosis serotype IB (strain PB1/+).